A 379-amino-acid polypeptide reads, in one-letter code: Programmed cell death protein 2-like (379 aa).

The chain is Programmed cell death protein 2-like (PDCD2L) from Gallus gallus (Chicken).